The following is a 316-amino-acid chain: Acetaldehyde dehydrogenase (316 aa).

Residue 11–14 coordinates NAD(+); sequence SGNI. Residue cysteine 131 is the Acyl-thioester intermediate of the active site. Residues 162–170 and asparagine 289 contribute to the NAD(+) site; that span reads SAGPGTRAN.

It belongs to the acetaldehyde dehydrogenase family. As to quaternary structure, interacts with MhpE.

It carries out the reaction acetaldehyde + NAD(+) + CoA = acetyl-CoA + NADH + H(+). It participates in aromatic compound metabolism; 3-phenylpropanoate degradation. Catalyzes the conversion of acetaldehyde to acetyl-CoA, using NAD(+) and coenzyme A. Is the final enzyme in the meta-cleavage pathway for the degradation of aromatic compounds. This chain is Acetaldehyde dehydrogenase, found in Klebsiella pneumoniae subsp. pneumoniae (strain ATCC 700721 / MGH 78578).